The following is a 66-amino-acid chain: Large ribosomal subunit protein bL31 (66 aa).

Residues cysteine 16, cysteine 18, cysteine 36, and cysteine 39 each contribute to the Zn(2+) site.

The protein belongs to the bacterial ribosomal protein bL31 family. Type A subfamily. Part of the 50S ribosomal subunit. Zn(2+) is required as a cofactor.

Binds the 23S rRNA. The chain is Large ribosomal subunit protein bL31 from Thermodesulfovibrio yellowstonii (strain ATCC 51303 / DSM 11347 / YP87).